The chain runs to 428 residues: Glutamyl-tRNA reductase (428 aa).

Residues T49–R52, S109, E114–Q116, and Q120 contribute to the substrate site. The active-site Nucleophile is C50. G189 to S194 is a binding site for NADP(+).

The protein belongs to the glutamyl-tRNA reductase family. In terms of assembly, homodimer.

It catalyses the reaction (S)-4-amino-5-oxopentanoate + tRNA(Glu) + NADP(+) = L-glutamyl-tRNA(Glu) + NADPH + H(+). It functions in the pathway porphyrin-containing compound metabolism; protoporphyrin-IX biosynthesis; 5-aminolevulinate from L-glutamyl-tRNA(Glu): step 1/2. It participates in porphyrin-containing compound metabolism; chlorophyll biosynthesis. Catalyzes the NADPH-dependent reduction of glutamyl-tRNA(Glu) to glutamate 1-semialdehyde (GSA). This chain is Glutamyl-tRNA reductase, found in Trichormus variabilis (strain ATCC 29413 / PCC 7937) (Anabaena variabilis).